The primary structure comprises 305 residues: Probable lipid kinase YegS-like (305 aa).

The DAGKc domain occupies 1-129 (MTQRRAMLIL…VDLGEVGGKL (129 aa)). ATP-binding positions include threonine 39, 65-71 (GDGTLRD), and threonine 92. Leucine 210, aspartate 213, and leucine 215 together coordinate Mg(2+). Glutamate 268 functions as the Proton acceptor in the catalytic mechanism.

Belongs to the diacylglycerol/lipid kinase family. YegS lipid kinase subfamily. It depends on Mg(2+) as a cofactor. Ca(2+) serves as cofactor.

It localises to the cytoplasm. Probably phosphorylates lipids; the in vivo substrate is unknown. The chain is Probable lipid kinase YegS-like from Pseudomonas syringae pv. tomato (strain ATCC BAA-871 / DC3000).